Reading from the N-terminus, the 464-residue chain is UPF0210 protein Cgl1545/cg1743 (464 aa).

Belongs to the UPF0210 family. As to quaternary structure, homodimer.

The polypeptide is UPF0210 protein Cgl1545/cg1743 (Corynebacterium glutamicum (strain ATCC 13032 / DSM 20300 / JCM 1318 / BCRC 11384 / CCUG 27702 / LMG 3730 / NBRC 12168 / NCIMB 10025 / NRRL B-2784 / 534)).